Consider the following 228-residue polypeptide: FAS1 domain-containing protein NCU02579 (228 aa).

Residues 1-18 form the signal peptide; that stretch reads MRFTPYLVLAPTAAVAFA. The tract at residues 50 to 74 is disordered; sequence PAVGLGPAMPPSGAPQADGPANAGG. The FAS1 domain maps to 77–225; it reads SVMLSDVMGR…GEVWILKGVR (149 aa).

It is found in the vacuole. The chain is FAS1 domain-containing protein NCU02579 from Neurospora crassa (strain ATCC 24698 / 74-OR23-1A / CBS 708.71 / DSM 1257 / FGSC 987).